The chain runs to 229 residues: DNA repair protein RecO (229 aa).

This sequence belongs to the RecO family.

Functionally, involved in DNA repair and RecF pathway recombination. The protein is DNA repair protein RecO of Pseudomonas fluorescens (strain ATCC BAA-477 / NRRL B-23932 / Pf-5).